A 418-amino-acid polypeptide reads, in one-letter code: Tyrosine--tRNA ligase (418 aa).

Residue Tyr-34 coordinates L-tyrosine. Positions 39–48 (PTADSLHLGH) match the 'HIGH' region motif. The L-tyrosine site is built by Tyr-169 and Gln-173. The 'KMSKS' region motif lies at 229 to 233 (KFGKS). Residue Lys-232 coordinates ATP. The 67-residue stretch at 352–418 (LNIVEILVSS…GKKKYAVLTY (67 aa)) folds into the S4 RNA-binding domain.

It belongs to the class-I aminoacyl-tRNA synthetase family. TyrS type 1 subfamily. As to quaternary structure, homodimer.

It localises to the cytoplasm. The catalysed reaction is tRNA(Tyr) + L-tyrosine + ATP = L-tyrosyl-tRNA(Tyr) + AMP + diphosphate + H(+). Functionally, catalyzes the attachment of tyrosine to tRNA(Tyr) in a two-step reaction: tyrosine is first activated by ATP to form Tyr-AMP and then transferred to the acceptor end of tRNA(Tyr). In Streptococcus uberis (strain ATCC BAA-854 / 0140J), this protein is Tyrosine--tRNA ligase.